We begin with the raw amino-acid sequence, 264 residues long: Caffeoyl-CoA O-methyltransferase 2 (264 aa).

Over residues 1–20 the composition is skewed to low complexity; the sequence is MATTATEATKTTAPAQEQQA. Positions 1-37 are disordered; that stretch reads MATTATEATKTTAPAQEQQANGNGNGEQKTRHSEVGH. Basic and acidic residues predominate over residues 28–37; sequence QKTRHSEVGH. Residue lysine 38 coordinates substrate. S-adenosyl-L-methionine is bound by residues threonine 80, glutamate 102, 104–105, serine 110, aspartate 128, and alanine 157; that span reads GV. Aspartate 180 is a binding site for substrate. Aspartate 180 contacts a divalent metal cation. Residue aspartate 182 participates in S-adenosyl-L-methionine binding. Aspartate 206 and asparagine 207 together coordinate a divalent metal cation. A substrate-binding site is contributed by asparagine 211.

This sequence belongs to the class I-like SAM-binding methyltransferase superfamily. Cation-dependent O-methyltransferase family. CCoAMT subfamily. Requires a divalent metal cation as cofactor.

The catalysed reaction is (E)-caffeoyl-CoA + S-adenosyl-L-methionine = (E)-feruloyl-CoA + S-adenosyl-L-homocysteine + H(+). The protein operates within aromatic compound metabolism; phenylpropanoid biosynthesis. Functionally, methylates caffeoyl-CoA to feruloyl-CoA and 5-hydroxyferuloyl-CoA to sinapoyl-CoA. Plays a role in the synthesis of feruloylated polysaccharides. Involved in the reinforcement of the plant cell wall. Also involved in the responding to wounding or pathogen challenge by the increased formation of cell wall-bound ferulic acid polymers. This is Caffeoyl-CoA O-methyltransferase 2 (CCOAOMT2) from Zea mays (Maize).